Here is a 41-residue protein sequence, read N- to C-terminus: MKNTVKLEQFVALKEKDLQKIKGGEMRISRIILDFLFLRKK.

A propeptide spanning residues 1 to 24 (MKNTVKLEQFVALKEKDLQKIKGG) is cleaved from the precursor.

It belongs to the ComC family.

The protein resides in the secreted. Acts as a pheromone, induces cells to develop competence for genetic transformation. This chain is Competence-stimulating peptide type 2 (comC2), found in Streptococcus pneumoniae serotype 4 (strain ATCC BAA-334 / TIGR4).